Reading from the N-terminus, the 232-residue chain is Peroxiredoxin (232 aa).

The Thioredoxin domain occupies Pro-6–Ile-161. The active-site Cysteine sulfenic acid (-SOH) intermediate is the Cys-48. Arg-124 lines the substrate pocket. An intrachain disulfide couples Cys-203 to Cys-209.

The protein belongs to the peroxiredoxin family. Prx6 subfamily. As to quaternary structure, homodecamer. Pentamer of dimers that assemble into a ring structure.

The protein localises to the cytoplasm. It catalyses the reaction a hydroperoxide + [thioredoxin]-dithiol = an alcohol + [thioredoxin]-disulfide + H2O. Functionally, thiol-specific peroxidase that catalyzes the reduction of hydrogen peroxide and organic hydroperoxides to water and alcohols, respectively. Plays a role in cell protection against oxidative stress by detoxifying peroxides. The polypeptide is Peroxiredoxin (Hyperthermus butylicus (strain DSM 5456 / JCM 9403 / PLM1-5)).